A 67-amino-acid chain; its full sequence is Beta-defensin 9 (67 aa).

The first 24 residues, 1 to 24 (MRTLCSLLLICCLLFSYTTPAANS), serve as a signal peptide directing secretion. Cystine bridges form between C34-C62, C41-C55, and C45-C63.

This sequence belongs to the beta-defensin family. Weakly expressed in adult and neonatal brain.

Its subcellular location is the secreted. In terms of biological role, has antibacterial activity. In Mus musculus (Mouse), this protein is Beta-defensin 9 (Defb9).